Here is a 158-residue protein sequence, read N- to C-terminus: Endoribonuclease YbeY (158 aa).

Zn(2+)-binding residues include histidine 118, histidine 122, and histidine 128.

The protein belongs to the endoribonuclease YbeY family. The cofactor is Zn(2+).

The protein resides in the cytoplasm. Its function is as follows. Single strand-specific metallo-endoribonuclease involved in late-stage 70S ribosome quality control and in maturation of the 3' terminus of the 16S rRNA. The polypeptide is Endoribonuclease YbeY (Bartonella henselae (strain ATCC 49882 / DSM 28221 / CCUG 30454 / Houston 1) (Rochalimaea henselae)).